The chain runs to 195 residues: ALK and LTK ligand 2b (195 aa).

Disulfide bonds link Cys156/Cys192 and Cys170/Cys179.

Belongs to the ALKAL family. As to quaternary structure, homodimer. As to expression, highly expressed in the swim bladder and single cells of unknown identity in the head.

The protein resides in the secreted. It localises to the cell membrane. In terms of biological role, cytokine that acts as a physiological ligand for receptor tyrosine kinases LTK and ALK. Required for neural crest cell differentiation and iridophore development during embryonic iridophore development and adult stripe development by acting as a receptor for LTK. Also required for iridophore formation in the adult eye. This is ALK and LTK ligand 2b from Danio rerio (Zebrafish).